Consider the following 318-residue polypeptide: Large ribosomal subunit protein uL10 (318 aa).

The residue at position 24 (tyrosine 24) is a Phosphotyrosine. At threonine 59 the chain carries Phosphothreonine. Lysine 264 participates in a covalent cross-link: Glycyl lysine isopeptide (Lys-Gly) (interchain with G-Cter in ubiquitin). Positions 293–318 are disordered; sequence TAAPAKVEAKEESEESDEDMGFGLFD. Lysine 298 is covalently cross-linked (Glycyl lysine isopeptide (Lys-Gly) (interchain with G-Cter in SUMO1); alternate). Lysine 298 participates in a covalent cross-link: Glycyl lysine isopeptide (Lys-Gly) (interchain with G-Cter in SUMO2); alternate. A compositionally biased stretch (acidic residues) spans 303–312; that stretch reads EESEESDEDM. A phosphoserine mark is found at serine 305 and serine 308.

Belongs to the universal ribosomal protein uL10 family. P0 forms a pentameric complex by interaction with dimers of P1 and P2. Identified in a IGF2BP1-dependent mRNP granule complex containing untranslated mRNAs. Interacts with APEX1. Interacts with FMR1. Ubiquitinated at Lys-264 by RNF14 and RNF25 in response to ribosome collisions (ribosome stalling).

The protein resides in the nucleus. It localises to the cytoplasm. Its function is as follows. Ribosomal protein P0 is the functional equivalent of E.coli protein L10. The protein is Large ribosomal subunit protein uL10 (RPLP0) of Bos taurus (Bovine).